Here is a 308-residue protein sequence, read N- to C-terminus: Ribosomal RNA large subunit methyltransferase F (308 aa).

This sequence belongs to the methyltransferase superfamily. METTL16/RlmF family.

It is found in the cytoplasm. The enzyme catalyses adenosine(1618) in 23S rRNA + S-adenosyl-L-methionine = N(6)-methyladenosine(1618) in 23S rRNA + S-adenosyl-L-homocysteine + H(+). Its function is as follows. Specifically methylates the adenine in position 1618 of 23S rRNA. The polypeptide is Ribosomal RNA large subunit methyltransferase F (Escherichia fergusonii (strain ATCC 35469 / DSM 13698 / CCUG 18766 / IAM 14443 / JCM 21226 / LMG 7866 / NBRC 102419 / NCTC 12128 / CDC 0568-73)).